The sequence spans 121 residues: Small ribosomal subunit protein uS13 (121 aa).

The interval 92 to 121 (RKGLPMRGQRTRTNARTRKGPRRAAQALKK) is disordered.

The protein belongs to the universal ribosomal protein uS13 family. In terms of assembly, part of the 30S ribosomal subunit. Forms a loose heterodimer with protein S19. Forms two bridges to the 50S subunit in the 70S ribosome.

Functionally, located at the top of the head of the 30S subunit, it contacts several helices of the 16S rRNA. In the 70S ribosome it contacts the 23S rRNA (bridge B1a) and protein L5 of the 50S subunit (bridge B1b), connecting the 2 subunits; these bridges are implicated in subunit movement. Contacts the tRNAs in the A and P-sites. The sequence is that of Small ribosomal subunit protein uS13 from Burkholderia cenocepacia (strain HI2424).